The following is a 97-amino-acid chain: Glutamyl-tRNA(Gln) amidotransferase subunit C (97 aa).

It belongs to the GatC family. As to quaternary structure, heterotrimer of A, B and C subunits.

The enzyme catalyses L-glutamyl-tRNA(Gln) + L-glutamine + ATP + H2O = L-glutaminyl-tRNA(Gln) + L-glutamate + ADP + phosphate + H(+). The catalysed reaction is L-aspartyl-tRNA(Asn) + L-glutamine + ATP + H2O = L-asparaginyl-tRNA(Asn) + L-glutamate + ADP + phosphate + 2 H(+). In terms of biological role, allows the formation of correctly charged Asn-tRNA(Asn) or Gln-tRNA(Gln) through the transamidation of misacylated Asp-tRNA(Asn) or Glu-tRNA(Gln) in organisms which lack either or both of asparaginyl-tRNA or glutaminyl-tRNA synthetases. The reaction takes place in the presence of glutamine and ATP through an activated phospho-Asp-tRNA(Asn) or phospho-Glu-tRNA(Gln). This Saccharolobus solfataricus (strain ATCC 35092 / DSM 1617 / JCM 11322 / P2) (Sulfolobus solfataricus) protein is Glutamyl-tRNA(Gln) amidotransferase subunit C.